The primary structure comprises 259 residues: Large ribosomal subunit protein uL2m (259 aa).

The interval Val234–Glu259 is disordered. Residues Pro250–Glu259 are compositionally biased toward basic and acidic residues.

It belongs to the universal ribosomal protein uL2 family.

It is found in the mitochondrion. This chain is Large ribosomal subunit protein uL2m (RPL2), found in Paramecium tetraurelia.